We begin with the raw amino-acid sequence, 547 residues long: Membrane protein insertase YidC (547 aa).

A helical transmembrane segment spans residues 8–28; it reads LRLILAIALSFLFIALYSYFF. The span at 37–50 shows a compositional bias: low complexity; that stretch reads QTTKQETTNNHTAT. The disordered stretch occupies residues 37 to 62; that stretch reads QTTKQETTNNHTATSPNAPNAQHFST. Residues 51–62 are compositionally biased toward polar residues; it reads SPNAPNAQHFST. Helical transmembrane passes span 325-345, 348-368, 414-434, 449-469, and 495-515; these read VIEY…LDYL, FVGN…IILY, GANP…FFAI, WILW…PLLM, and LLPL…VLYW.

It belongs to the OXA1/ALB3/YidC family. Type 1 subfamily. In terms of assembly, interacts with the Sec translocase complex via SecD. Specifically interacts with transmembrane segments of nascent integral membrane proteins during membrane integration.

The protein localises to the cell inner membrane. Required for the insertion and/or proper folding and/or complex formation of integral membrane proteins into the membrane. Involved in integration of membrane proteins that insert both dependently and independently of the Sec translocase complex, as well as at least some lipoproteins. Aids folding of multispanning membrane proteins. The chain is Membrane protein insertase YidC from Helicobacter pylori (strain ATCC 700392 / 26695) (Campylobacter pylori).